The following is a 1186-amino-acid chain: Chromosome partition protein Smc (1186 aa).

32 to 39 contacts ATP; sequence PNGSGKSN. Coiled-coil stretches lie at residues 167-206 and 259-481; these read VLKYKTRKKKAENKLFETQDNLNRVEDILHELEGQVEPLK and SSAI…QAYQ. Positions 519–637 constitute an SMC hinge domain; that stretch reads GIRGAVLELI…EDLKGANELA (119 aa). Coiled coils occupy residues 672 to 864, 893 to 943, and 990 to 1029; these read LLGR…MSSS, RDQR…NLLQ, and SIDEFERVNERYKFLSEQKEDLTEAKNTLFQVIEEMDEEM.

This sequence belongs to the SMC family. Homodimer.

Its subcellular location is the cytoplasm. Functionally, required for chromosome condensation and partitioning. This chain is Chromosome partition protein Smc, found in Bacillus subtilis (strain 168).